Reading from the N-terminus, the 332-residue chain is Biotin synthase (332 aa).

The 227-residue stretch at 47–273 (YYGNKVKLNM…MNPTKEIRIA (227 aa)) folds into the Radical SAM core domain. C65, C69, and C72 together coordinate [4Fe-4S] cluster. Residues C109, C141, C201, and R271 each contribute to the [2Fe-2S] cluster site.

It belongs to the radical SAM superfamily. Biotin synthase family. Homodimer. [4Fe-4S] cluster is required as a cofactor. The cofactor is [2Fe-2S] cluster.

The catalysed reaction is (4R,5S)-dethiobiotin + (sulfur carrier)-SH + 2 reduced [2Fe-2S]-[ferredoxin] + 2 S-adenosyl-L-methionine = (sulfur carrier)-H + biotin + 2 5'-deoxyadenosine + 2 L-methionine + 2 oxidized [2Fe-2S]-[ferredoxin]. It functions in the pathway cofactor biosynthesis; biotin biosynthesis; biotin from 7,8-diaminononanoate: step 2/2. Catalyzes the conversion of dethiobiotin (DTB) to biotin by the insertion of a sulfur atom into dethiobiotin via a radical-based mechanism. In Geobacillus thermodenitrificans (strain NG80-2), this protein is Biotin synthase.